The primary structure comprises 410 residues: 3-phenylpropionate/cinnamic acid dioxygenase ferredoxin--NAD(+) reductase component (410 aa).

Residue 5-36 coordinates FAD; the sequence is TIIIVGGGQAAAMAAASLRQQGFTGELHLFSD. 146–184 contributes to the NAD(+) binding site; sequence SVVIVGAGTIGLELAASATQRSAAQRSAAQRRCKVTVIE.

Belongs to the bacterial ring-hydroxylating dioxygenase ferredoxin reductase family. As to quaternary structure, this dioxygenase system consists of four proteins: the two subunits of the hydroxylase component (HcaE and HcaF), a ferredoxin (HcaC) and a ferredoxin reductase (HcaD). FAD serves as cofactor.

The catalysed reaction is 2 reduced [2Fe-2S]-[ferredoxin] + NAD(+) + H(+) = 2 oxidized [2Fe-2S]-[ferredoxin] + NADH. It functions in the pathway aromatic compound metabolism; 3-phenylpropanoate degradation. In terms of biological role, part of the multicomponent 3-phenylpropionate dioxygenase, that converts 3-phenylpropionic acid (PP) and cinnamic acid (CI) into 3-phenylpropionate-dihydrodiol (PP-dihydrodiol) and cinnamic acid-dihydrodiol (CI-dihydrodiol), respectively. This chain is 3-phenylpropionate/cinnamic acid dioxygenase ferredoxin--NAD(+) reductase component, found in Shigella flexneri serotype 5b (strain 8401).